A 134-amino-acid polypeptide reads, in one-letter code: Profilin-2 (134 aa).

Cys13 and Cys118 are joined by a disulfide. Positions 84 to 100 match the Involved in PIP2 interaction motif; it reads AVIRGKKGSGGITIKKT. Position 114 is a phosphothreonine (Thr114).

It belongs to the profilin family. Occurs in many kinds of cells as a complex with monomeric actin in a 1:1 ratio. Post-translationally, phosphorylated by MAP kinases.

The protein localises to the cytoplasm. The protein resides in the cytoskeleton. Its function is as follows. Binds to actin and affects the structure of the cytoskeleton. At high concentrations, profilin prevents the polymerization of actin, whereas it enhances it at low concentrations. By binding to PIP2, it inhibits the formation of IP3 and DG. This Olea europaea (Common olive) protein is Profilin-2 (PRO2).